The primary structure comprises 255 residues: MALLQWMLDHVQDEEKNCENLSIDDQHSLFGINRDWLSFLQLSKLEITHLKHVYKLVDNDRAHLMVHPSSDNVHAWSFLCKPDNVKVVILGQDPYPDGRGCGLAFGTVKECSIPESLKNIFKELERSVPNFSPPDNGCLNSWCSEGVLLLNSIFTVVHGLPMSHEAFGWQTLSYKIISKLSVEMDSLVFLLWGNHARKLSYLIDARKHLVLESAHPSPKVKSARMPFIGCNHFVRANLFLTEHGKDPINWNILNE.

The Proton acceptor role is filled by Asp93.

The protein belongs to the uracil-DNA glycosylase (UDG) superfamily. UNG family.

Its subcellular location is the host nucleus. It carries out the reaction Hydrolyzes single-stranded DNA or mismatched double-stranded DNA and polynucleotides, releasing free uracil.. Its function is as follows. Excises uracil residues from the DNA which can arise as a result of misincorporation of dUMP residues by DNA polymerase or deamination of cytosines. Therefore may reduce deleterious uracil incorporation into the viral genome, particularly in terminally differentiated cells which lack DNA repair enzymes. The chain is Uracil-DNA glycosylase (U81) from Human herpesvirus 6A (strain Uganda-1102) (HHV-6 variant A).